The following is a 498-amino-acid chain: ATP synthase subunit beta, chloroplastic (498 aa).

172–179 (GGAGVGKT) lines the ATP pocket.

The protein belongs to the ATPase alpha/beta chains family. F-type ATPases have 2 components, CF(1) - the catalytic core - and CF(0) - the membrane proton channel. CF(1) has five subunits: alpha(3), beta(3), gamma(1), delta(1), epsilon(1). CF(0) has four main subunits: a(1), b(1), b'(1) and c(9-12).

It localises to the plastid. The protein localises to the chloroplast thylakoid membrane. It catalyses the reaction ATP + H2O + 4 H(+)(in) = ADP + phosphate + 5 H(+)(out). Its function is as follows. Produces ATP from ADP in the presence of a proton gradient across the membrane. The catalytic sites are hosted primarily by the beta subunits. The protein is ATP synthase subunit beta, chloroplastic of Salacca zalacca (Snake palm).